The primary structure comprises 795 residues: Copper-exporting P-type ATPase (795 aa).

2 HMA domains span residues 5-70 and 72-138; these read QNAT…YDVV and DKAE…YDAQ. The Cu(+) site is built by Cys16, Cys19, Cys83, and Cys86. 6 consecutive transmembrane segments (helical) span residues 161 to 181, 187 to 207, 224 to 244, 256 to 276, 412 to 432, and 440 to 460; these read LMISTILSLPLLMTMLVHLFN, ILMNPWFQFILATPIQFIIGW, MDVLVALGTSAAYFYSIYEMI, LYFETSAVLITLILFGKYLEA, YFVPIVIAIALLTFLIWITLV, and ALVAAISVLVIACPCALGLAT. The active-site 4-aspartylphosphate intermediate is the Asp496. The Mg(2+) site is built by Asp690 and Asp694. 2 consecutive transmembrane segments (helical) span residues 747 to 764 and 770 to 788; these read NLFWAFGYNIAGIPIAAM and WIAGAAMALSSVSVVSNAL.

This sequence belongs to the cation transport ATPase (P-type) (TC 3.A.3) family. Type IB subfamily.

The protein localises to the cell membrane. It catalyses the reaction Cu(+)(in) + ATP + H2O = Cu(+)(out) + ADP + phosphate + H(+). In terms of biological role, involved in copper export. The sequence is that of Copper-exporting P-type ATPase (copA) from Staphylococcus haemolyticus (strain JCSC1435).